Reading from the N-terminus, the 694-residue chain is DNA-directed RNA polymerase subunit beta' (694 aa).

Positions 69, 71, 87, and 90 each coordinate Zn(2+). Positions 489, 491, and 493 each coordinate Mg(2+).

This sequence belongs to the RNA polymerase beta' chain family. RpoC1 subfamily. As to quaternary structure, in plastids the minimal PEP RNA polymerase catalytic core is composed of four subunits: alpha, beta, beta', and beta''. When a (nuclear-encoded) sigma factor is associated with the core the holoenzyme is formed, which can initiate transcription. The cofactor is Mg(2+). Requires Zn(2+) as cofactor.

The protein localises to the plastid. It localises to the chloroplast. The catalysed reaction is RNA(n) + a ribonucleoside 5'-triphosphate = RNA(n+1) + diphosphate. In terms of biological role, DNA-dependent RNA polymerase catalyzes the transcription of DNA into RNA using the four ribonucleoside triphosphates as substrates. The chain is DNA-directed RNA polymerase subunit beta' from Adiantum capillus-veneris (Maidenhair fern).